The sequence spans 468 residues: ATP synthase subunit beta (468 aa).

148–155 (GGAGVGKT) contributes to the ATP binding site.

The protein belongs to the ATPase alpha/beta chains family. As to quaternary structure, F-type ATPases have 2 components, CF(1) - the catalytic core - and CF(0) - the membrane proton channel. CF(1) has five subunits: alpha(3), beta(3), gamma(1), delta(1), epsilon(1). CF(0) has three main subunits: a(1), b(2) and c(9-12). The alpha and beta chains form an alternating ring which encloses part of the gamma chain. CF(1) is attached to CF(0) by a central stalk formed by the gamma and epsilon chains, while a peripheral stalk is formed by the delta and b chains.

It is found in the cell inner membrane. The enzyme catalyses ATP + H2O + 4 H(+)(in) = ADP + phosphate + 5 H(+)(out). In terms of biological role, produces ATP from ADP in the presence of a proton gradient across the membrane. The catalytic sites are hosted primarily by the beta subunits. In Xanthomonas campestris pv. campestris (strain B100), this protein is ATP synthase subunit beta.